We begin with the raw amino-acid sequence, 916 residues long: Protein translocase subunit SecA (916 aa).

ATP-binding positions include glutamine 88, 106 to 110, and aspartate 519; that span reads GEGKT. Residues cysteine 902, cysteine 904, cysteine 913, and cysteine 914 each contribute to the Zn(2+) site.

It belongs to the SecA family. As to quaternary structure, monomer and homodimer. Part of the essential Sec protein translocation apparatus which comprises SecA, SecYEG and auxiliary proteins SecDF. Other proteins may also be involved. The cofactor is Zn(2+).

The protein resides in the cell inner membrane. It localises to the cytoplasm. It catalyses the reaction ATP + H2O + cellular proteinSide 1 = ADP + phosphate + cellular proteinSide 2.. Its function is as follows. Part of the Sec protein translocase complex. Interacts with the SecYEG preprotein conducting channel. Has a central role in coupling the hydrolysis of ATP to the transfer of proteins into and across the cell membrane, serving as an ATP-driven molecular motor driving the stepwise translocation of polypeptide chains across the membrane. The protein is Protein translocase subunit SecA of Treponema pallidum (strain Nichols).